The primary structure comprises 228 residues: CD9 antigen (228 aa).

Residues 2 to 12 (PVKGGTKCIKY) lie on the Cytoplasmic side of the membrane. Residue C9 is the site of S-palmitoyl cysteine attachment. Residues 13–33 (LLFGFNFIFWLAGIAVLAIGL) form a helical membrane-spanning segment. Residues 34–55 (WLRFDSQTKSIFEQETNNNNSS) lie on the Extracellular side of the membrane. Residues N52 and N53 are each glycosylated (N-linked (GlcNAc...) asparagine). A helical membrane pass occupies residues 56 to 76 (FYTGVYILIGAGALMMLVGFL). Residues 77–87 (GCCGAVQESQC) lie on the Cytoplasmic side of the membrane. 3 S-palmitoyl cysteine lipidation sites follow: C78, C79, and C87. A helical membrane pass occupies residues 88-111 (MLGLFFGFLLVIFAIEIAAAIWGY). The Extracellular portion of the chain corresponds to 112 to 195 (SHKDEVIKEV…KEVFDNKFHI (84 aa)). 2 disulfides stabilise this stretch: C152/C181 and C153/C167. The chain crosses the membrane as a helical span at residues 196–221 (IGAVGIGIAVVMIFGMIFSMILCCAI). 2 S-palmitoyl cysteine lipidation sites follow: C218 and C219. At 222 to 228 (RRNREMV) the chain is on the cytoplasmic side.

Belongs to the tetraspanin (TM4SF) family. In terms of assembly, forms both disulfide-linked homodimers and higher homooligomers as well as heterooligomers with other members of the tetraspanin family. Interacts (via the second extracellular domain) with integrin ITGAV:ITGB3. Interacts with integrin ITGA6:ITGB1; interaction takes place in oocytes and is involved in sperm-egg fusion. Part of integrin-tetraspanin complexes composed of CD81, beta-1 and beta-2 integrins in the membrane of monocyte/macrophages. Interacts with CD63; identified in a complex with CD63 and ITGB3. Associates with CR2/CD21 and with PTGFRN/CD9P1. Part of a complex composed of CD9, CD81, PTGFRN and IGSF8. Interacts directly with IGSF8. Interacts with PDPN; this interaction is homophilic and attenuates platelet aggregation and pulmonary metastasis induced by PDPN. Interacts (on T cell side) with CD81 at immunological synapses between antigen-presenting cells and T cells. In terms of processing, palmitoylated at a low, basal level in unstimulated platelets. The level of palmitoylation increases when platelets are activated by thrombin (in vitro). The protein exists in three forms with molecular masses between 22 and 27 kDa, and is known to carry covalently linked fatty acids. Palmitoylation by ZDHHC2 regulates CD9 expression, association with other tetraspanin family proteins and function in cell adhesion. In terms of tissue distribution, detected in platelets (at protein level). Expressed by a variety of hematopoietic and epithelial cells.

It is found in the cell membrane. The protein resides in the membrane. Its subcellular location is the secreted. The protein localises to the extracellular exosome. Integral membrane protein associated with integrins, which regulates different processes, such as sperm-egg fusion, platelet activation and aggregation, and cell adhesion. Present at the cell surface of oocytes and plays a key role in sperm-egg fusion, possibly by organizing multiprotein complexes and the morphology of the membrane required for the fusion. In myoblasts, associates with CD81 and PTGFRN and inhibits myotube fusion during muscle regeneration. In macrophages, associates with CD81 and beta-1 and beta-2 integrins, and prevents macrophage fusion into multinucleated giant cells specialized in ingesting complement-opsonized large particles. Also prevents the fusion between mononuclear cell progenitors into osteoclasts in charge of bone resorption. Acts as a receptor for PSG17. Involved in platelet activation and aggregation. Regulates paranodal junction formation. Involved in cell adhesion, cell motility and tumor metastasis. This chain is CD9 antigen, found in Homo sapiens (Human).